The following is a 396-amino-acid chain: Chaperone protein DnaJ 1 (396 aa).

A J domain is found at 10–75; the sequence is DYYKVLGVPK…KKRKEYDEAR (66 aa). Positions 127–137 are enriched in gly residues; that stretch reads LFNRGGAGPGT. Residues 127-149 are disordered; the sequence is LFNRGGAGPGTGTRTQPRRGQDI. Residues 163–241 form a CR-type zinc finger; sequence GATVPLRMSS…CKGSGRAKSS (79 aa). The Zn(2+) site is built by C176, C179, C192, C195, C215, C218, C229, and C232. 4 CXXCXGXG motif repeats span residues 176–183, 192–199, 215–222, and 229–236; these read CKACSGTG, CPTCVGTG, CPDCKGRG, and CEICKGSG.

The protein belongs to the DnaJ family. As to quaternary structure, homodimer. Requires Zn(2+) as cofactor.

The protein localises to the cytoplasm. Participates actively in the response to hyperosmotic and heat shock by preventing the aggregation of stress-denatured proteins and by disaggregating proteins, also in an autonomous, DnaK-independent fashion. Unfolded proteins bind initially to DnaJ; upon interaction with the DnaJ-bound protein, DnaK hydrolyzes its bound ATP, resulting in the formation of a stable complex. GrpE releases ADP from DnaK; ATP binding to DnaK triggers the release of the substrate protein, thus completing the reaction cycle. Several rounds of ATP-dependent interactions between DnaJ, DnaK and GrpE are required for fully efficient folding. Also involved, together with DnaK and GrpE, in the DNA replication of plasmids through activation of initiation proteins. In Streptomyces avermitilis (strain ATCC 31267 / DSM 46492 / JCM 5070 / NBRC 14893 / NCIMB 12804 / NRRL 8165 / MA-4680), this protein is Chaperone protein DnaJ 1.